Consider the following 276-residue polypeptide: Dermonecrotic toxin LafSicTox-betaIE2 (276 aa).

His5 is an active-site residue. Residues Glu25 and Asp27 each contribute to the Mg(2+) site. The active-site Nucleophile is the His41. 2 cysteine pairs are disulfide-bonded: Cys45/Cys51 and Cys47/Cys189. Asp85 contributes to the Mg(2+) binding site.

The protein belongs to the arthropod phospholipase D family. Class II subfamily. Mg(2+) is required as a cofactor. In terms of tissue distribution, expressed by the venom gland.

The protein resides in the secreted. The enzyme catalyses an N-(acyl)-sphingosylphosphocholine = an N-(acyl)-sphingosyl-1,3-cyclic phosphate + choline. It carries out the reaction an N-(acyl)-sphingosylphosphoethanolamine = an N-(acyl)-sphingosyl-1,3-cyclic phosphate + ethanolamine. The catalysed reaction is a 1-acyl-sn-glycero-3-phosphocholine = a 1-acyl-sn-glycero-2,3-cyclic phosphate + choline. It catalyses the reaction a 1-acyl-sn-glycero-3-phosphoethanolamine = a 1-acyl-sn-glycero-2,3-cyclic phosphate + ethanolamine. Dermonecrotic toxins cleave the phosphodiester linkage between the phosphate and headgroup of certain phospholipids (sphingolipid and lysolipid substrates), forming an alcohol (often choline) and a cyclic phosphate. This toxin acts on sphingomyelin (SM). It may also act on ceramide phosphoethanolamine (CPE), lysophosphatidylcholine (LPC) and lysophosphatidylethanolamine (LPE), but not on lysophosphatidylserine (LPS), and lysophosphatidylglycerol (LPG). It acts by transphosphatidylation, releasing exclusively cyclic phosphate products as second products. Induces dermonecrosis, hemolysis, increased vascular permeability, edema, inflammatory response, and platelet aggregation. The polypeptide is Dermonecrotic toxin LafSicTox-betaIE2 (Loxosceles aff. spinulosa (strain GJB-2008) (Recluse spider)).